Consider the following 394-residue polypeptide: Bifunctional enzyme IspD/IspF (394 aa).

The 2-C-methyl-D-erythritol 4-phosphate cytidylyltransferase stretch occupies residues 1–230; the sequence is MADTLAIVVA…AEALLGGGPV (230 aa). A 2-C-methyl-D-erythritol 2,4-cyclodiphosphate synthase region spans residues 231-394; it reads LVGFGYDVHR…RIVLPGDRVL (164 aa). Residues aspartate 237 and histidine 239 each contribute to the a divalent metal cation site. Residues 237–239 and 263–264 contribute to the 4-CDP-2-C-methyl-D-erythritol 2-phosphate site; these read DVH and HS. Histidine 271 provides a ligand contact to a divalent metal cation. 4-CDP-2-C-methyl-D-erythritol 2-phosphate contacts are provided by residues 285–287, 290–294, 361–364, and phenylalanine 368; these read DIG, FPDDD, and TTTE.

In the N-terminal section; belongs to the IspD/TarI cytidylyltransferase family. IspD subfamily. It in the C-terminal section; belongs to the IspF family. A divalent metal cation is required as a cofactor.

It carries out the reaction 2-C-methyl-D-erythritol 4-phosphate + CTP + H(+) = 4-CDP-2-C-methyl-D-erythritol + diphosphate. It catalyses the reaction 4-CDP-2-C-methyl-D-erythritol 2-phosphate = 2-C-methyl-D-erythritol 2,4-cyclic diphosphate + CMP. It participates in isoprenoid biosynthesis; isopentenyl diphosphate biosynthesis via DXP pathway; isopentenyl diphosphate from 1-deoxy-D-xylulose 5-phosphate: step 2/6. The protein operates within isoprenoid biosynthesis; isopentenyl diphosphate biosynthesis via DXP pathway; isopentenyl diphosphate from 1-deoxy-D-xylulose 5-phosphate: step 4/6. Functionally, bifunctional enzyme that catalyzes the formation of 4-diphosphocytidyl-2-C-methyl-D-erythritol from CTP and 2-C-methyl-D-erythritol 4-phosphate (MEP) (IspD), and catalyzes the conversion of 4-diphosphocytidyl-2-C-methyl-D-erythritol 2-phosphate (CDP-ME2P) to 2-C-methyl-D-erythritol 2,4-cyclodiphosphate (ME-CPP) with a corresponding release of cytidine 5-monophosphate (CMP) (IspF). This Desulforudis audaxviator (strain MP104C) protein is Bifunctional enzyme IspD/IspF.